Consider the following 863-residue polypeptide: Envelope glycoprotein gp160 (863 aa).

An N-terminal signal peptide occupies residues 1 to 31; the sequence is MRVMGIRMNYQHLWKWGIMLLGILMTCSVAE. The Extracellular segment spans residues 32–691; it reads DLWVTVYYGV…ITKWLWYIKI (660 aa). Cys-53 and Cys-73 are disulfide-bonded. Asn-87, Asn-129, Asn-136, Asn-142, Asn-143, Asn-159, Asn-163, Asn-194, Asn-199, Asn-209, Asn-246, Asn-274, Asn-288, Asn-301, and Asn-307 each carry an N-linked (GlcNAc...) asparagine; by host glycan. Intrachain disulfides connect Cys-118/Cys-217, Cys-125/Cys-208, Cys-130/Cys-160, Cys-230/Cys-259, and Cys-240/Cys-251. Positions 130–159 are V1; the sequence is CTNAGGNKTTNGNNTTNQEEQMMEKGEMKN. Residues 160-208 are V2; sequence CSFNITTVISDKKKQVHALFYRLDVVPIDDDNSANTSNTNYTNYRLINC. Residues 308-341 are V3; it reads CTRPDNKITRQSTPIGLGQALYTTRIKGDIRQAY. A disulfide bond links Cys-308 and Cys-342. N-linked (GlcNAc...) asparagine; by host glycans are attached at residues Asn-343, Asn-350, and Asn-365. Residues 374–384 are CD4-binding loop; it reads PAGGDPEITTH. Cystine bridges form between Cys-388/Cys-452 and Cys-395/Cys-425. The segment at 395 to 425 is V4; that stretch reads CNTSRLFNSTWNSSTWNNDTLNSEGTIKLPC. Asn-396, Asn-402, Asn-406, Asn-412, Asn-455, Asn-468, Asn-469, and Asn-472 each carry an N-linked (GlcNAc...) asparagine; by host glycan. V5 regions lie at residues 467–478 and 470–478; these read VNNSTNETFRPG and STNETFRPG. The interval 519-539 is fusion peptide; that stretch reads AIGLGAVFLGFLGAAGSTMGA. Residues 581–599 are immunosuppression; sequence KQLQARVLAVESYLKDQQL. Cys-605 and Cys-611 are disulfide-bonded. Residues Asn-618, Asn-623, Asn-632, and Asn-644 are each glycosylated (N-linked (GlcNAc...) asparagine; by host). Residues 640-674 adopt a coiled-coil conformation; the sequence is REIDNYTGVIYSLIENSQIQQEKNEQDLLQLDKWA. Residues 669 to 690 are MPER; binding to GalCer; the sequence is QLDKWASLWNWFSITKWLWYIK. A helical membrane pass occupies residues 692–712; that stretch reads FIMIVGGLIGLRIVFTVLSLV. Residues 713-863 lie on the Cytoplasmic side of the membrane; that stretch reads NRVRQGYSPL…VRQGLERALL (151 aa). A YXXL motif; contains endocytosis signal motif is present at residues 719-722; the sequence is YSPL. Positions 729–748 are disordered; the sequence is PAPRGPDRPEGIEEEGGEQG. A lipid anchor (S-palmitoyl cysteine; by host) is attached at Cys-771. The short motif at 862-863 is the Di-leucine internalization motif element; that stretch reads LL.

The protein belongs to the HIV-1 env protein family. As to quaternary structure, the mature envelope protein (Env) consists of a homotrimer of non-covalently associated gp120-gp41 heterodimers. The resulting complex protrudes from the virus surface as a spike. There seems to be as few as 10 spikes on the average virion. Interacts with host CD4, CCR5 and CXCR4. Gp120 also interacts with the C-type lectins CD209/DC-SIGN and CLEC4M/DC-SIGNR (collectively referred to as DC-SIGN(R)). Gp120 and gp41 interact with GalCer. Gp120 interacts with host ITGA4/ITGB7 complex; on CD4+ T-cells, this interaction results in rapid activation of integrin ITGAL/LFA-1, which facilitates efficient cell-to-cell spreading of HIV-1. Gp120 interacts with cell-associated heparan sulfate; this interaction increases virus infectivity on permissive cells and may be involved in infection of CD4- cells. In terms of assembly, the mature envelope protein (Env) consists of a homotrimer of non-covalently associated gp120-gp41 heterodimers. The resulting complex protrudes from the virus surface as a spike. There seems to be as few as 10 spikes on the average virion. Highly glycosylated by host. The high number of glycan on the protein is reffered to as 'glycan shield' because it contributes to hide protein sequence from adaptive immune system. In terms of processing, palmitoylation of the transmembrane protein and of Env polyprotein (prior to its proteolytic cleavage) is essential for their association with host cell membrane lipid rafts. Palmitoylation is therefore required for envelope trafficking to classical lipid rafts, but not for viral replication. Post-translationally, specific enzymatic cleavages in vivo yield mature proteins. Envelope glycoproteins are synthesized as an inactive precursor that is heavily N-glycosylated and processed likely by host cell furin in the Golgi to yield the mature SU and TM proteins. The cleavage site between SU and TM requires the minimal sequence [KR]-X-[KR]-R. About 2 of the 9 disulfide bonds of gp41 are reduced by P4HB/PDI, following binding to CD4 receptor.

The protein resides in the virion membrane. It localises to the host cell membrane. The protein localises to the host endosome membrane. Its function is as follows. Oligomerizes in the host endoplasmic reticulum into predominantly trimers. In a second time, gp160 transits in the host Golgi, where glycosylation is completed. The precursor is then proteolytically cleaved in the trans-Golgi and thereby activated by cellular furin or furin-like proteases to produce gp120 and gp41. Attaches the virus to the host lymphoid cell by binding to the primary receptor CD4. This interaction induces a structural rearrangement creating a high affinity binding site for a chemokine coreceptor like CXCR4 and/or CCR5. Acts as a ligand for CD209/DC-SIGN and CLEC4M/DC-SIGNR, which are respectively found on dendritic cells (DCs), and on endothelial cells of liver sinusoids and lymph node sinuses. These interactions allow capture of viral particles at mucosal surfaces by these cells and subsequent transmission to permissive cells. HIV subverts the migration properties of dendritic cells to gain access to CD4+ T-cells in lymph nodes. Virus transmission to permissive T-cells occurs either in trans (without DCs infection, through viral capture and transmission), or in cis (following DCs productive infection, through the usual CD4-gp120 interaction), thereby inducing a robust infection. In trans infection, bound virions remain infectious over days and it is proposed that they are not degraded, but protected in non-lysosomal acidic organelles within the DCs close to the cell membrane thus contributing to the viral infectious potential during DCs' migration from the periphery to the lymphoid tissues. On arrival at lymphoid tissues, intact virions recycle back to DCs' cell surface allowing virus transmission to CD4+ T-cells. Functionally, acts as a class I viral fusion protein. Under the current model, the protein has at least 3 conformational states: pre-fusion native state, pre-hairpin intermediate state, and post-fusion hairpin state. During fusion of viral and target intracellular membranes, the coiled coil regions (heptad repeats) assume a trimer-of-hairpins structure, positioning the fusion peptide in close proximity to the C-terminal region of the ectodomain. The formation of this structure appears to drive apposition and subsequent fusion of viral and target cell membranes. Complete fusion occurs in host cell endosomes and is dynamin-dependent, however some lipid transfer might occur at the plasma membrane. The virus undergoes clathrin-dependent internalization long before endosomal fusion, thus minimizing the surface exposure of conserved viral epitopes during fusion and reducing the efficacy of inhibitors targeting these epitopes. Membranes fusion leads to delivery of the nucleocapsid into the cytoplasm. The polypeptide is Envelope glycoprotein gp160 (Human immunodeficiency virus type 1 group M subtype D (isolate Z84) (HIV-1)).